The sequence spans 732 residues: Catalase-peroxidase (732 aa).

An N-terminal signal peptide occupies residues 1–45; it reads MDTKVDNAGKCPVVHTHTAHGGRSNRDWWPNQLNLRILHQNSSLS. A cross-link (tryptophyl-tyrosyl-methioninium (Trp-Tyr) (with M-246)) is located at residues 97-220; sequence WHSAGTYRTG…LSAVQMGLIY (124 aa). His-98 acts as the Proton acceptor in catalysis. Positions 220-246 form a cross-link, tryptophyl-tyrosyl-methioninium (Tyr-Met) (with W-97); that stretch reads YVNPEGPNGNPDPLAAARDIRETFARM. His-261 is a binding site for heme b.

This sequence belongs to the peroxidase family. Peroxidase/catalase subfamily. In terms of assembly, homodimer or homotetramer. Requires heme b as cofactor. In terms of processing, formation of the three residue Trp-Tyr-Met cross-link is important for the catalase, but not the peroxidase activity of the enzyme.

The enzyme catalyses H2O2 + AH2 = A + 2 H2O. It catalyses the reaction 2 H2O2 = O2 + 2 H2O. In terms of biological role, bifunctional enzyme with both catalase and broad-spectrum peroxidase activity. The protein is Catalase-peroxidase of Rhizobium rhizogenes (strain K84 / ATCC BAA-868) (Agrobacterium radiobacter).